Here is a 335-residue protein sequence, read N- to C-terminus: Acetyl-coenzyme A carboxylase carboxyl transferase subunit alpha (335 aa).

The 255-residue stretch at 40–294 folds into the CoA carboxyltransferase C-terminal domain; it reads QLETLAARRR…KEAIEKHLNA (255 aa).

This sequence belongs to the AccA family. As to quaternary structure, acetyl-CoA carboxylase is a heterohexamer composed of biotin carboxyl carrier protein (AccB), biotin carboxylase (AccC) and two subunits each of ACCase subunit alpha (AccA) and ACCase subunit beta (AccD).

The protein resides in the cytoplasm. It catalyses the reaction N(6)-carboxybiotinyl-L-lysyl-[protein] + acetyl-CoA = N(6)-biotinyl-L-lysyl-[protein] + malonyl-CoA. It functions in the pathway lipid metabolism; malonyl-CoA biosynthesis; malonyl-CoA from acetyl-CoA: step 1/1. Its function is as follows. Component of the acetyl coenzyme A carboxylase (ACC) complex. First, biotin carboxylase catalyzes the carboxylation of biotin on its carrier protein (BCCP) and then the CO(2) group is transferred by the carboxyltransferase to acetyl-CoA to form malonyl-CoA. This chain is Acetyl-coenzyme A carboxylase carboxyl transferase subunit alpha, found in Prochlorococcus marinus (strain AS9601).